A 220-amino-acid chain; its full sequence is Ribosomal RNA large subunit methyltransferase E (220 aa).

Positions 60, 62, 92, 108, and 133 each coordinate S-adenosyl-L-methionine. The active-site Proton acceptor is the Lys173.

Belongs to the class I-like SAM-binding methyltransferase superfamily. RNA methyltransferase RlmE family.

It localises to the cytoplasm. The catalysed reaction is uridine(2552) in 23S rRNA + S-adenosyl-L-methionine = 2'-O-methyluridine(2552) in 23S rRNA + S-adenosyl-L-homocysteine + H(+). Its function is as follows. Specifically methylates the uridine in position 2552 of 23S rRNA at the 2'-O position of the ribose in the fully assembled 50S ribosomal subunit. This chain is Ribosomal RNA large subunit methyltransferase E, found in Burkholderia thailandensis (strain ATCC 700388 / DSM 13276 / CCUG 48851 / CIP 106301 / E264).